The chain runs to 363 residues: Carbamoyl phosphate synthase small chain (363 aa).

The CPSase stretch occupies residues 1–172; it reads MKAFLVLDNG…TKYIFGTHTG (172 aa). S45, G224, and G226 together coordinate L-glutamine. Residues 176 to 362 form the Glutamine amidotransferase type-1 domain; the sequence is KLAVYDYGVK…YDLVETTKRG (187 aa). Residue C252 is the Nucleophile of the active site. Residues L253, Q256, N294, G296, and F297 each coordinate L-glutamine. Active-site residues include H335 and E337.

This sequence belongs to the CarA family. Composed of two chains; the small (or glutamine) chain promotes the hydrolysis of glutamine to ammonia, which is used by the large (or ammonia) chain to synthesize carbamoyl phosphate. Tetramer of heterodimers (alpha,beta)4.

It catalyses the reaction hydrogencarbonate + L-glutamine + 2 ATP + H2O = carbamoyl phosphate + L-glutamate + 2 ADP + phosphate + 2 H(+). It carries out the reaction L-glutamine + H2O = L-glutamate + NH4(+). The protein operates within amino-acid biosynthesis; L-arginine biosynthesis; carbamoyl phosphate from bicarbonate: step 1/1. Its pathway is pyrimidine metabolism; UMP biosynthesis via de novo pathway; (S)-dihydroorotate from bicarbonate: step 1/3. Its function is as follows. Small subunit of the glutamine-dependent carbamoyl phosphate synthetase (CPSase). CPSase catalyzes the formation of carbamoyl phosphate from the ammonia moiety of glutamine, carbonate, and phosphate donated by ATP, constituting the first step of 2 biosynthetic pathways, one leading to arginine and/or urea and the other to pyrimidine nucleotides. The small subunit (glutamine amidotransferase) binds and cleaves glutamine to supply the large subunit with the substrate ammonia. This chain is Carbamoyl phosphate synthase small chain, found in Leptospira borgpetersenii serovar Hardjo-bovis (strain L550).